The sequence spans 249 residues: tRNA (guanine-N(1)-)-methyltransferase (249 aa).

S-adenosyl-L-methionine-binding positions include Gly113 and Leu133 to Leu138.

It belongs to the RNA methyltransferase TrmD family. In terms of assembly, homodimer.

The protein resides in the cytoplasm. The catalysed reaction is guanosine(37) in tRNA + S-adenosyl-L-methionine = N(1)-methylguanosine(37) in tRNA + S-adenosyl-L-homocysteine + H(+). Specifically methylates guanosine-37 in various tRNAs. This chain is tRNA (guanine-N(1)-)-methyltransferase, found in Leptothrix cholodnii (strain ATCC 51168 / LMG 8142 / SP-6) (Leptothrix discophora (strain SP-6)).